The sequence spans 448 residues: Elongation factor 1-alpha (448 aa).

The tr-type G domain occupies 5–230 (KIHISIVVIG…DQINEPKRPS (226 aa)). The G1 stretch occupies residues 14 to 21 (GHVDSGKS). 14–21 (GHVDSGKS) lines the GTP pocket. An N6,N6-dimethyllysine modification is found at lysine 55. The tract at residues 70–74 (GITID) is G2. The residue at position 79 (lysine 79) is an N6,N6,N6-trimethyllysine. Residues 91 to 94 (DAPG) are G3. GTP-binding positions include 91 to 95 (DAPGH) and 153 to 156 (NKMD). The G4 stretch occupies residues 153–156 (NKMD). Position 187 is an N6,N6,N6-trimethyllysine (lysine 187). The G5 stretch occupies residues 194 to 196 (SGF). Residue lysine 261 is modified to N6-methyllysine. Glutamate 289 carries the post-translational modification 5-glutamyl glycerylphosphorylethanolamine. Lysine 306 carries the N6,N6,N6-trimethyllysine modification. Glutamate 362 bears the 5-glutamyl glycerylphosphorylethanolamine mark. Lysine 396 carries the post-translational modification N6,N6,N6-trimethyllysine.

This sequence belongs to the TRAFAC class translation factor GTPase superfamily. Classic translation factor GTPase family. EF-Tu/EF-1A subfamily.

The protein resides in the cytoplasm. This protein promotes the GTP-dependent binding of aminoacyl-tRNA to the A-site of ribosomes during protein biosynthesis. The sequence is that of Elongation factor 1-alpha from Solanum lycopersicum (Tomato).